A 977-amino-acid chain; its full sequence is Glutamate receptor 2 (977 aa).

The first 19 residues, 1-19, serve as a signal peptide directing secretion; sequence MNKNLLVFGFLIFVKIGET. Over 20–621 the chain is Extracellular; sequence SKKFPLRAFV…FSFMEPLGMT (602 aa). N-linked (GlcNAc...) asparagine glycosylation is found at Asn-36, Asn-227, Asn-291, Asn-427, Asn-532, and Asn-566. A helical transmembrane segment spans residues 622-642; it reads IWIFTLSSYFGVSLTIFLVSW. Topologically, residues 643–695 are cytoplasmic; it reads FSPYEKRIEFKRGEFTVTNEFTLYNSLWFTLAAFMQQGTDILPRAVSGRIASS. The helical transmembrane segment at 696–716 threads the bilayer; sequence CWWFFTLIIVSSYTANLAAFL. Over 717-898 the chain is Extracellular; that stretch reads TLERMTPPIE…GTSSSLNLSK (182 aa). N-linked (GlcNAc...) asparagine glycans are attached at residues Asn-783 and Asn-895. The chain crosses the membrane as a helical span at residues 899–919; it reads VAGIFYILLAGMVLSMCTALV. Over 920–977 the chain is Cytoplasmic; sequence EFLFRKNKENREKERNRMRSSRPLKPGILASCERAKQKQLQNRRTKSEEVSTPRSTLF. The disordered stretch occupies residues 954 to 977; it reads AKQKQLQNRRTKSEEVSTPRSTLF.

It belongs to the glutamate-gated ion channel (TC 1.A.10.1) family. As to expression, command interneurons of the locomotory control circuit (AIA, AIB, AVA, AVD, AVE, PVC, RIA, RIG and RIR) and motor neurons (AVG, M1, RMDD and RMDV).

It localises to the membrane. Its subcellular location is the postsynaptic cell membrane. L-glutamate acts as an excitatory neurotransmitter at many synapses in the central nervous system. The postsynaptic actions of glutamate are mediated by a variety of receptors that are named according to their selective agonists. Required for response to mechanical and osmotic stimuli. This chain is Glutamate receptor 2 (glr-2), found in Caenorhabditis elegans.